A 179-amino-acid polypeptide reads, in one-letter code: Large ribosomal subunit protein uL6c (179 aa).

This sequence belongs to the universal ribosomal protein uL6 family. Part of the 50S ribosomal subunit.

The protein localises to the plastid. Its subcellular location is the cyanelle. Its function is as follows. Binds 23S rRNA. This is Large ribosomal subunit protein uL6c (rpl6) from Cyanophora paradoxa.